The following is an 83-amino-acid chain: uncharacterized protein (83 aa).

Helical transmembrane passes span 11 to 31 and 48 to 68; these read FYCI…SFLL and WHNL…HIWM.

It localises to the cell membrane. This is an uncharacterized protein from Bacillus subtilis (strain 168).